The following is a 156-amino-acid chain: Small ribosomal subunit protein uS7 (156 aa).

Belongs to the universal ribosomal protein uS7 family. In terms of assembly, part of the 30S ribosomal subunit. Contacts proteins S9 and S11.

One of the primary rRNA binding proteins, it binds directly to 16S rRNA where it nucleates assembly of the head domain of the 30S subunit. Is located at the subunit interface close to the decoding center, probably blocks exit of the E-site tRNA. In Pseudomonas syringae pv. tomato (strain ATCC BAA-871 / DC3000), this protein is Small ribosomal subunit protein uS7.